The chain runs to 688 residues: Methionine--tRNA ligase (688 aa).

The 'HIGH' region motif lies at 13–23; the sequence is PYANGPIHIGH. Zn(2+) contacts are provided by cysteine 144, cysteine 147, cysteine 157, and cysteine 160. Positions 334–338 match the 'KMSKS' region motif; it reads KMSKS. Lysine 337 provides a ligand contact to ATP. Residues 582–688 enclose the tRNA-binding domain; it reads DFAKIDLRVA…AGAVPGMRVR (107 aa).

The protein belongs to the class-I aminoacyl-tRNA synthetase family. MetG type 1 subfamily. Homodimer. Requires Zn(2+) as cofactor.

The protein resides in the cytoplasm. The enzyme catalyses tRNA(Met) + L-methionine + ATP = L-methionyl-tRNA(Met) + AMP + diphosphate. In terms of biological role, is required not only for elongation of protein synthesis but also for the initiation of all mRNA translation through initiator tRNA(fMet) aminoacylation. The protein is Methionine--tRNA ligase of Ralstonia nicotianae (strain ATCC BAA-1114 / GMI1000) (Ralstonia solanacearum).